The primary structure comprises 388 residues: Chorismate synthase (388 aa).

NADP(+) is bound by residues R39 and R45. FMN-binding positions include 130-132, 251-252, G296, 311-315, and R337; these read RSS, NA, and KPIPT.

This sequence belongs to the chorismate synthase family. Homotetramer. FMNH2 serves as cofactor.

The catalysed reaction is 5-O-(1-carboxyvinyl)-3-phosphoshikimate = chorismate + phosphate. It functions in the pathway metabolic intermediate biosynthesis; chorismate biosynthesis; chorismate from D-erythrose 4-phosphate and phosphoenolpyruvate: step 7/7. Its function is as follows. Catalyzes the anti-1,4-elimination of the C-3 phosphate and the C-6 proR hydrogen from 5-enolpyruvylshikimate-3-phosphate (EPSP) to yield chorismate, which is the branch point compound that serves as the starting substrate for the three terminal pathways of aromatic amino acid biosynthesis. This reaction introduces a second double bond into the aromatic ring system. The chain is Chorismate synthase from Lactococcus lactis subsp. lactis (strain IL1403) (Streptococcus lactis).